The chain runs to 247 residues: Cell division protein ZapD (247 aa).

This sequence belongs to the ZapD family. In terms of assembly, interacts with FtsZ.

Its subcellular location is the cytoplasm. Its function is as follows. Cell division factor that enhances FtsZ-ring assembly. Directly interacts with FtsZ and promotes bundling of FtsZ protofilaments, with a reduction in FtsZ GTPase activity. In Shigella boydii serotype 18 (strain CDC 3083-94 / BS512), this protein is Cell division protein ZapD.